The chain runs to 231 residues: LexA repressor (231 aa).

Residues 26–46 constitute a DNA-binding region (H-T-H motif); sequence FDEMKDALDLRSKSGIHRLIT. Residues serine 152 and lysine 190 each act as for autocatalytic cleavage activity in the active site.

It belongs to the peptidase S24 family. In terms of assembly, homodimer.

The catalysed reaction is Hydrolysis of Ala-|-Gly bond in repressor LexA.. In terms of biological role, represses a number of genes involved in the response to DNA damage (SOS response), including recA and lexA. In the presence of single-stranded DNA, RecA interacts with LexA causing an autocatalytic cleavage which disrupts the DNA-binding part of LexA, leading to derepression of the SOS regulon and eventually DNA repair. The protein is LexA repressor of Dinoroseobacter shibae (strain DSM 16493 / NCIMB 14021 / DFL 12).